Consider the following 198-residue polypeptide: HTH-type transcriptional regulator BetI (198 aa).

Residues 8–68 form the HTH tetR-type domain; the sequence is PLRRRELIDA…ATMRHLLREL (61 aa). The H-T-H motif DNA-binding region spans 31–50; the sequence is TVAQIAHEAGVSPALAHHYF.

It participates in amine and polyamine biosynthesis; betaine biosynthesis via choline pathway [regulation]. Functionally, repressor involved in the biosynthesis of the osmoprotectant glycine betaine. It represses transcription of the choline transporter BetT and the genes of BetAB involved in the synthesis of glycine betaine. In Brucella canis (strain ATCC 23365 / NCTC 10854 / RM-666), this protein is HTH-type transcriptional regulator BetI.